A 617-amino-acid polypeptide reads, in one-letter code: Secretogranin-2 (617 aa).

The first 27 residues, 1–27 (MAEAKTHWLGAALSLIPLIFLISGAEA), serve as a signal peptide directing secretion. A propeptide spanning residues 28-30 (ASF) is cleaved from the precursor. Residues 120–143 (QAENEPQSAPKENKPYALNSEKNF) are disordered. Tyr151 is modified (sulfotyrosine). Ser174 is modified (phosphoserine). The O-glycosylated at one site stretch occupies residues 182–200 (TNEIVEEQYTPQSLATLES). 2 stretches are compositionally biased toward basic and acidic residues: residues 257–284 (IESQ…EMKR) and 293–302 (EDLRKESKDQ). Residues 257 to 302 (IESQTQEEVRDSKENIEKNEQINDEMKRSGQLGIQEEDLRKESKDQ) are disordered. At Ser268 the chain carries Phosphoserine. Phosphoserine is present on residues Ser432, Ser532, Ser555, and Ser556. Positions 552 to 583 (NQGSSQETDKLAPVSKRFPVGPPKNDDTPNRQ) are disordered.

It belongs to the chromogranin/secretogranin protein family. As to quaternary structure, interacts with Secretogranin III/SCG3. In terms of processing, O-glycosylated.

The protein localises to the secreted. Neuroendocrine protein of the granin family that regulates the biogenesis of secretory granules. The chain is Secretogranin-2 (SCG2) from Homo sapiens (Human).